The following is a 415-amino-acid chain: Levansucrase LscA (415 aa).

Trp45, Asp46, Ala132, Arg202, and Asp203 together coordinate sucrose. Asp46 (nucleophile) is an active-site residue. The Proton donor/acceptor role is filled by Glu287.

The protein belongs to the glycosyl hydrolase 68 family.

It is found in the periplasm. The catalysed reaction is [6)-beta-D-fructofuranosyl-(2-&gt;](n) alpha-D-glucopyranoside + sucrose = [6)-beta-D-fructofuranosyl-(2-&gt;](n+1) alpha-D-glucopyranoside + D-glucose. Functionally, catalyzes the synthesis of levan, a fructose polymer, by transferring the fructosyl moiety from sucrose to a growing acceptor molecule. LscA encodes a functional enzyme in vitro, when expressed in E.coli under control of the vector-based lactose promoter (Plac), and it can restore levan production to the lscB-lscC double mutant. However, lscA is not expressed in P.savastanoi pv. glycinea PG4180 under standard conditions. It could be an ancestral Lsc variant in P.syringae. The sequence is that of Levansucrase LscA from Pseudomonas savastanoi pv. glycinea (Pseudomonas syringae pv. glycinea).